Consider the following 149-residue polypeptide: MSKTLSFKTYSAKPADVERKWYVIDAEGQVLGRMAAEIARVLRGKHKPQFTPHVDTGDFIVVTNAEKVALSGNKENLKTYFSHSHYPGGVRVDSVKDLLRKKPEKIIEHAVWGMLPHNNLGRQLFRKLKVYAGTQHPHEAQAPTEMKIH.

Belongs to the universal ribosomal protein uL13 family. In terms of assembly, part of the 50S ribosomal subunit.

Functionally, this protein is one of the early assembly proteins of the 50S ribosomal subunit, although it is not seen to bind rRNA by itself. It is important during the early stages of 50S assembly. The sequence is that of Large ribosomal subunit protein uL13 from Chlorobium luteolum (strain DSM 273 / BCRC 81028 / 2530) (Pelodictyon luteolum).